Here is a 485-residue protein sequence, read N- to C-terminus: Cobyric acid synthase (485 aa).

A GATase cobBQ-type domain is found at 248–435; sequence RLKVAVAVPP…LHGLFESPAA (188 aa). C329 functions as the Nucleophile in the catalytic mechanism. H427 is an active-site residue.

The protein belongs to the CobB/CobQ family. CobQ subfamily.

Its pathway is cofactor biosynthesis; adenosylcobalamin biosynthesis. Functionally, catalyzes amidations at positions B, D, E, and G on adenosylcobyrinic A,C-diamide. NH(2) groups are provided by glutamine, and one molecule of ATP is hydrogenolyzed for each amidation. This chain is Cobyric acid synthase, found in Azotobacter vinelandii (strain DJ / ATCC BAA-1303).